Here is a 259-residue protein sequence, read N- to C-terminus: Eukaryotic translation initiation factor 3 subunit J (259 aa).

Residues 1–12 show a composition bias toward low complexity; it reads MAAAAAAAAGDS. Residues 1 to 70 are sufficient for interaction with EIF3B; it reads MAAAAAAAAG…KEEAEVKPEV (70 aa). Positions 1 to 111 are disordered; that stretch reads MAAAAAAAAG…EPEEPKVLTP (111 aa). Phosphoserine occurs at positions 12, 14, and 21. Acidic residues predominate over residues 41 to 60; sequence EGEDEDEDVKDNWDDDDDEK. A compositionally biased stretch (basic and acidic residues) spans 61–107; that stretch reads KEEAEVKPEVKISEKKKIAEKIKEKERQQKKRQEEIKKRLEEPEEPK. Residues 71–136 are a coiled coil; sequence KISEKKKIAE…ESDLELAKET (66 aa). Residue Lys107 forms a Glycyl lysine isopeptide (Lys-Gly) (interchain with G-Cter in SUMO2) linkage. Phosphothreonine is present on Thr110. Ser128 is subject to Phosphoserine. The tract at residues 218 to 247 is disordered; it reads SKAKKKKKGVVPGGGLKATMKDDLADYGGY. Residues 244–259 are promotes stable association with the 40S ribosome; sequence YGGYDGGYVQDYEDFM. A Phosphotyrosine modification is found at Tyr255.

It belongs to the eIF-3 subunit J family. In terms of assembly, component of the eukaryotic translation initiation factor 3 (eIF-3) complex, which is composed of 13 subunits: EIF3A, EIF3B, EIF3C, EIF3D, EIF3E, EIF3F, EIF3G, EIF3H, EIF3I, EIF3J, EIF3K, EIF3L and EIF3M. The eIF-3 complex appears to include 3 stable modules: module A is composed of EIF3A, EIF3B, EIF3G and EIF3I; module B is composed of EIF3F, EIF3H, and EIF3M; and module C is composed of EIF3C, EIF3D, EIF3E, EIF3K and EIF3L. EIF3C of module C binds EIF3B of module A and EIF3H of module B, thereby linking the three modules. EIF3J is a labile subunit that binds to the eIF-3 complex via EIF3B. The eIF-3 complex interacts with RPS6KB1 under conditions of nutrient depletion. Mitogenic stimulation leads to binding and activation of a complex composed of MTOR and RPTOR, leading to phosphorylation and release of RPS6KB1 and binding of EIF4B to eIF-3. Post-translationally, phosphorylated. Phosphorylation is enhanced upon serum stimulation.

The protein localises to the cytoplasm. Component of the eukaryotic translation initiation factor 3 (eIF-3) complex, which is required for several steps in the initiation of protein synthesis. The eIF-3 complex associates with the 40S ribosome and facilitates the recruitment of eIF-1, eIF-1A, eIF-2:GTP:methionyl-tRNAi and eIF-5 to form the 43S pre-initiation complex (43S PIC). The eIF-3 complex stimulates mRNA recruitment to the 43S PIC and scanning of the mRNA for AUG recognition. The eIF-3 complex is also required for disassembly and recycling of post-termination ribosomal complexes and subsequently prevents premature joining of the 40S and 60S ribosomal subunits prior to initiation. The eIF-3 complex specifically targets and initiates translation of a subset of mRNAs involved in cell proliferation, including cell cycling, differentiation and apoptosis, and uses different modes of RNA stem-loop binding to exert either translational activation or repression. This subunit binds directly within the mRNA entry channel of the 40S ribosome to the aminoacyl (A) site. It may regulate the interaction between the 43S PIC and mRNA. This is Eukaryotic translation initiation factor 3 subunit J from Pongo abelii (Sumatran orangutan).